Reading from the N-terminus, the 347-residue chain is D-alanine--D-alanine ligase (347 aa).

The ATP-grasp domain occupies 131–333 (KRVLESAGIA…YPELIERLVD (203 aa)). ATP is bound at residue 161–216 (EEKLAYPVFTKPSNMGSSVGISKSENQEELRQALKLAFRYDSRVLVEQGVNAREIE). Residues Asp-287, Glu-300, and Asn-302 each coordinate Mg(2+).

It belongs to the D-alanine--D-alanine ligase family. Requires Mg(2+) as cofactor. It depends on Mn(2+) as a cofactor.

It localises to the cytoplasm. The enzyme catalyses 2 D-alanine + ATP = D-alanyl-D-alanine + ADP + phosphate + H(+). It participates in cell wall biogenesis; peptidoglycan biosynthesis. Its function is as follows. Cell wall formation. The chain is D-alanine--D-alanine ligase from Streptococcus pneumoniae (strain JJA).